Consider the following 276-residue polypeptide: MGIKNLNSVTPSLRGTVLLDKSTLWKGRPEKSLVGYKISHGGRNSRGVITVRHRGKGHKRLYRIIDFKRKKVGVPATVERLEYDPNRTAFIALLSYDDGEKSYIIAPHGLKKGDVIMSGNGSDILPGNCLMLKLIPVGTFVHNVELRPGGGGIIARSAGTYAQLMSKDGIYVLLRLSSGEIRKVLADCCATIGIVSNLDNQNVKLGKAGRSRWLGIRPTVRGVAMNPIDHPHGGGEGKTSGGRNPVTPWGVSTKGKKTRKKNKSSNKYIKRVSDKG.

Residues 224-276 (AMNPIDHPHGGGEGKTSGGRNPVTPWGVSTKGKKTRKKNKSSNKYIKRVSDKG) are disordered. Residues 254–270 (KGKKTRKKNKSSNKYIK) show a composition bias toward basic residues.

It belongs to the universal ribosomal protein uL2 family. In terms of assembly, part of the 50S ribosomal subunit. Forms a bridge to the 30S subunit in the 70S ribosome.

Its function is as follows. One of the primary rRNA binding proteins. Required for association of the 30S and 50S subunits to form the 70S ribosome, for tRNA binding and peptide bond formation. It has been suggested to have peptidyltransferase activity; this is somewhat controversial. Makes several contacts with the 16S rRNA in the 70S ribosome. The polypeptide is Large ribosomal subunit protein uL2 (Ehrlichia ruminantium (strain Gardel)).